The chain runs to 265 residues: Aquaporin-5 (265 aa).

At 1–12 (MKKEVCSLAFFK) the chain is on the cytoplasmic side. A helical transmembrane segment spans residues 13-33 (AVFAEFLATLIFVFFGLGSAL). Topologically, residues 34–39 (KWPSAL) are extracellular. A helical transmembrane segment spans residues 40 to 60 (PTILQISIAFGLAIGTLAQAL). Residues 61–65 (GPVSG) are Cytoplasmic-facing. Residues 66 to 74 (GHINPAITL) constitute an intramembrane region (discontinuously helical). The NPA 1 signature appears at 69 to 71 (NPA). At 75–87 (ALLIGNQISLLRA) the chain is on the cytoplasmic side. The helical transmembrane segment at 88–108 (VFYVAAQLVGAIAGAGILYWL) threads the bilayer. Topologically, residues 109–126 (APLNARGNLAVNALNNNT) are extracellular. Residue Asn-124 is glycosylated (N-linked (GlcNAc...) asparagine). Residues 127–147 (TPGKAMVVELILTFQLALCIF) form a helical membrane-spanning segment. At 148–158 (SSTDSRRTSPV) the chain is on the cytoplasmic side. A helical membrane pass occupies residues 159 to 179 (GSPALSIGLSVTLGHLVGIYF). Thr-180 is a topological domain (extracellular). An intramembrane region (discontinuously helical) is located at residues 181 to 191 (GCSMNPARSFG). The NPA 2 motif lies at 185–187 (NPA). Residues 192-203 (PAVVMNRFSPSH) are Extracellular-facing. A helical transmembrane segment spans residues 204–224 (WVFWVGPIVGAMLAAILYFYL). Over 225 to 265 (LFPSSLSLHDRVAVVKGTYEPEEDWEDHREERKKTIELTAH) the chain is Cytoplasmic.

The protein belongs to the MIP/aquaporin (TC 1.A.8) family. As to quaternary structure, homotetramer; each monomer provides an independent water pore. Interacts with TRPV4; the interaction is probably indirect and regulates TRPV4 activation by hypotonicity. As to expression, salivary glands, lacrimal glands, corneal epithelium in eye, trachea and lung.

The protein localises to the apical cell membrane. It is found in the cell membrane. The protein resides in the cytoplasmic vesicle membrane. It catalyses the reaction H2O(in) = H2O(out). In terms of biological role, aquaporins form homotetrameric transmembrane channels, with each monomer independently mediating water transport across the plasma membrane along its osmotic gradient. Plays an important role in fluid secretion in salivary glands. Required for TRPV4 activation by hypotonicity. Together with TRPV4, controls regulatory volume decrease in salivary epithelial cells. Seems to play a redundant role in water transport in the eye, lung and in sweat glands. In Rattus norvegicus (Rat), this protein is Aquaporin-5.